The chain runs to 527 residues: Protein PLASTID TRANSCRIPTIONALLY ACTIVE 12, chloroplastic (527 aa).

The transit peptide at 1-30 (MASISTTTWLYRGQVCTDSGKSSNCIVQRR) directs the protein to the chloroplast. The segment at 1–115 (MASISTTTWL…ASIPGEDYWP (115 aa)) is PHYA-interacting region 1 (PIR1). Residues 89–188 (SYMDSTSGKL…NDSSDGFVTY (100 aa)) are disordered. The span at 163–181 (TNDEVSDSEDSSEEEENDS) shows a compositional bias: acidic residues. Short sequence motifs (nuclear localization signal) lie at residues 204 to 211 (DKKLGRPH) and 235 to 242 (WRKPEKEQ). Positions 252-352 (DVETVFLKAM…EMFSHQTDRE (101 aa)) are PHYA-interacting region 2 (PIR2). The segment covering 458–471 (GENDDDEDDADVEK) has biased composition (acidic residues). A disordered region spans residues 458 to 527 (GENDDDEDDA…LMDFEEETDP (70 aa)). Over residues 485–504 (ETPELRTAKPKPKKEGRMSL) the composition is skewed to basic and acidic residues. Residues 506 to 527 (EAVDDAENLTDFLMDFEEETDP) are compositionally biased toward acidic residues. The short motif at 512-520 (ENLTDFLMD) is the Required and sufficient for transcriptional transactivation activity and to trigger PIF proteins degradation element.

Component of the transcriptionally active chromosome (TAC) complexes. Interacts with PTAC14 and PTAC7. Binds directly to PTAC6/PAP8 in the nucleus. Interacts with MED14. Binds to SL1/MTERF3. Binds to photoactivated phytochromes (e.g. PHYA and PHYB) via their photosensory domains; these interactions stimulate its light-mediated accumulation. Associates, via its N-terminal region, with phytochrome-interacting factors (PIFs) including PIF1, PIF3, PIF4, PIF5, PIF6, BHLH72/PIF7, UNE10/PIF8 and PIL1. Binds to RAD4. Associates with MRL7/RCB. As to expression, mostly expressed in cotyledons, leaves, stems and flowers, but barely in roots.

It is found in the plastid. The protein resides in the chloroplast. Its subcellular location is the nucleus. Functionally, involved in plastid gene expression. Acidic transcriptional coactivator necessary for the transactivation of many PIFs target genes (class B genes), particularly during the regulation of hypocotyl growth. Plays dual opposite roles in regulating hypocotyl growth, preventing it in red and far-red conditions, but promoting it otherwise. Required in the nucleus for the initiation of photomorphogenesis mediated by phytochromes (PHYs) (e.g. PHYA and PHYB) by mediating PHYs localization to photobodies, especially in response to red and far-red light, and implicating phytochrome nuclear bodies as sites of proteolysis for PHYs and PIFs proteins (e.g. PIF1 and PIF3). Acts downstream of PHYs and upstream of DET1. Involved in UV tolerance in both roots and hypocotyls, specifically in dark conditions. Element of a PIF4/HMR/MED14-dependent thermoresponsive process; acts as a PIF4 transcriptional coactivator to trigger the thermoresponsive growth-relevant genes (e.g. mainly involved in biosynthesis and signaling of the phytohormone auxin) and promote warm-temperature-dependent (e.g. 27 degrees Celsius) PIF4 and MED14 stabilization and accumulation, being more prominently involved in long days (LD) and continuous red light (Rc) than in short days (SD), thus modulating warm temperature elicitation of MED14-dependent thermomorphogenesis (e.g. hypocotyl elongation). This chain is Protein PLASTID TRANSCRIPTIONALLY ACTIVE 12, chloroplastic, found in Arabidopsis thaliana (Mouse-ear cress).